A 364-amino-acid polypeptide reads, in one-letter code: tRNA 2-selenouridine synthase (364 aa).

The 124-residue stretch at 14–137 (LLADTPLIDV…LRQTAIQATW (124 aa)) folds into the Rhodanese domain. The active-site S-selanylcysteine intermediate is the Cys-97.

Belongs to the SelU family. Monomer.

It carries out the reaction 5-methylaminomethyl-2-thiouridine(34) in tRNA + selenophosphate + (2E)-geranyl diphosphate + H2O + H(+) = 5-methylaminomethyl-2-selenouridine(34) in tRNA + (2E)-thiogeraniol + phosphate + diphosphate. It catalyses the reaction 5-methylaminomethyl-2-thiouridine(34) in tRNA + (2E)-geranyl diphosphate = 5-methylaminomethyl-S-(2E)-geranyl-thiouridine(34) in tRNA + diphosphate. The enzyme catalyses 5-methylaminomethyl-S-(2E)-geranyl-thiouridine(34) in tRNA + selenophosphate + H(+) = 5-methylaminomethyl-2-(Se-phospho)selenouridine(34) in tRNA + (2E)-thiogeraniol. The catalysed reaction is 5-methylaminomethyl-2-(Se-phospho)selenouridine(34) in tRNA + H2O = 5-methylaminomethyl-2-selenouridine(34) in tRNA + phosphate. Involved in the post-transcriptional modification of the uridine at the wobble position (U34) of tRNA(Lys), tRNA(Glu) and tRNA(Gln). Catalyzes the conversion of 2-thiouridine (S2U-RNA) to 2-selenouridine (Se2U-RNA). Acts in a two-step process involving geranylation of 2-thiouridine (S2U) to S-geranyl-2-thiouridine (geS2U) and subsequent selenation of the latter derivative to 2-selenouridine (Se2U) in the tRNA chain. The sequence is that of tRNA 2-selenouridine synthase from Salmonella typhi.